The chain runs to 90 residues: Putative cytochrome c oxidase subunit 5b-like (90 aa).

3 residues coordinate Zn(2+): Cys43, Cys67, and Cys70.

Belongs to the cytochrome c oxidase subunit 5B (TC 3.D.4.11) family.

This Arabidopsis thaliana (Mouse-ear cress) protein is Putative cytochrome c oxidase subunit 5b-like.